Reading from the N-terminus, the 95-residue chain is MSRSVKKGPFVDKKLYKRVVEMNKAANQRNKKVIKSYSRCSTIIPEMVGFTISVHNGKSWIPVYITEEFVGHKLGEFSPTRVFRGHSGSDKKVGR.

The protein belongs to the universal ribosomal protein uS19 family.

Functionally, protein S19 forms a complex with S13 that binds strongly to the 16S ribosomal RNA. This is Small ribosomal subunit protein uS19 (rpsS) from Treponema pallidum (strain Nichols).